The primary structure comprises 180 residues: MSRIGRLPIPIPKGVEVKVSPDNVVTVKGAKGTLEKKFPPIVNIEVRDGEVVVTRKGDDKEERAMHGTTRAIIANMVKGVTEGFEKALEIVGVGYRAAKQGKKLILNVGYSHPVEIEEEPGIEIIVEGNNRIIVRGADKERVGQVAANIRRVREPDAYQGKGIRYVGEVVRLKEGKTGKK.

It belongs to the universal ribosomal protein uL6 family. As to quaternary structure, part of the 50S ribosomal subunit.

In terms of biological role, this protein binds to the 23S rRNA, and is important in its secondary structure. It is located near the subunit interface in the base of the L7/L12 stalk, and near the tRNA binding site of the peptidyltransferase center. This Caldanaerobacter subterraneus subsp. tengcongensis (strain DSM 15242 / JCM 11007 / NBRC 100824 / MB4) (Thermoanaerobacter tengcongensis) protein is Large ribosomal subunit protein uL6.